We begin with the raw amino-acid sequence, 434 residues long: Protein TolB homolog (434 aa).

A signal peptide spans 1-27; the sequence is MRSTRNSFACLCIMLFGMLFVPFTLRA. The disordered stretch occupies residues 413 to 434; that stretch reads SNQRPLLNMQGEQQQPSWSVSK.

Belongs to the TolB family.

Its subcellular location is the periplasm. This is Protein TolB homolog from Chlorobaculum tepidum (strain ATCC 49652 / DSM 12025 / NBRC 103806 / TLS) (Chlorobium tepidum).